A 204-amino-acid polypeptide reads, in one-letter code: MEMTEKIYLKCENCGFEEQEVLKKKIYNKSAYYLVRCPNCGSVREIVDKVKLSQAKLIISRYDISESKVINIPEDETYKVGDTIEIDGEKIEITKIETPESVKSALGEDIKVIWGKSLSIPKKLGISINDRSKTYGIYIYVPNDFEFEVEKVYRINDGFFRLKKIKTEKGTAKKAKAKDIKRLYGDVTRPVRNYVDLSEFYKGE.

This is an uncharacterized protein from Methanocaldococcus jannaschii (strain ATCC 43067 / DSM 2661 / JAL-1 / JCM 10045 / NBRC 100440) (Methanococcus jannaschii).